A 168-amino-acid polypeptide reads, in one-letter code: GPI-anchored protein LLG1 (168 aa).

A signal peptide spans M1–S23. N-linked (GlcNAc...) asparagine glycosylation occurs at N57. N144 carries the GPI-anchor amidated asparagine lipid modification. Positions A145 to F168 are cleaved as a propeptide — removed in mature form.

Interacts with FER. As to expression, expressed in pollen, pollen tubes, sporophytic pistil tissues, in the early stages of female gametophyte development, and in unfertilized, mature ovules. Expressed in roots, lateral roots, shoots, cotyledons, petioles, developing leaves and anther filaments.

The protein localises to the cell membrane. Functionally, component of the FER-regulated Rho GTPase signaling complex. Acts as a chaperone and coreceptor for FER. Required for localization of FER to the plasma membrane. The protein is GPI-anchored protein LLG1 of Arabidopsis thaliana (Mouse-ear cress).